An 85-amino-acid polypeptide reads, in one-letter code: Sec-independent protein translocase protein TatA (85 aa).

The helical transmembrane segment at 1–21 (MGGISIWQLLIIALIVVLLFG) threads the bilayer. A disordered region spans residues 43-85 (MSSEEDKKALEDAEAAKPVQTAQTAQPTQQATEKKPESNKEQA). A compositionally biased stretch (basic and acidic residues) spans 46–57 (EEDKKALEDAEA). Positions 58–73 (AKPVQTAQTAQPTQQA) are enriched in low complexity. The segment covering 74 to 85 (TEKKPESNKEQA) has biased composition (basic and acidic residues).

This sequence belongs to the TatA/E family. The Tat system comprises two distinct complexes: a TatABC complex, containing multiple copies of TatA, TatB and TatC subunits, and a separate TatA complex, containing only TatA subunits. Substrates initially bind to the TatABC complex, which probably triggers association of the separate TatA complex to form the active translocon.

The protein localises to the cell inner membrane. Its function is as follows. Part of the twin-arginine translocation (Tat) system that transports large folded proteins containing a characteristic twin-arginine motif in their signal peptide across membranes. TatA could form the protein-conducting channel of the Tat system. This Shewanella sp. (strain MR-4) protein is Sec-independent protein translocase protein TatA.